Here is a 340-residue protein sequence, read N- to C-terminus: ATPase BagA (340 aa).

Positions 31, 33, 34, 35, 36, 240, 316, and 318 each coordinate ATP.

The protein belongs to the arsA ATPase family. BagA/BagB subfamily. In terms of assembly, forms a heterodimer composed of BagA and BagB. Interacts with Rv1509. Also interacts with a large number of proteins, including proteins required for mycolic acid biosynthesis.

With respect to regulation, the ATPase activity of the BagAB complex is not stimulated by antimonite, an arsenite substitute, suggesting that BagAB is not a transporter for this family of elements. In terms of biological role, component of the heterodimeric BagAB ATPase complex, whose two subunits are actively involved in ATP hydrolysis. The ATPase activity is required to mediate resistance against nitric oxide (NO) and elevated levels of glycerol. This Mycobacterium tuberculosis (strain ATCC 25618 / H37Rv) protein is ATPase BagA.